The following is a 177-amino-acid chain: Bifunctional protein PyrR (177 aa).

A PRPP-binding motif is present at residues 99–111; the sequence is VVLVDDVLFTGRT.

This sequence belongs to the purine/pyrimidine phosphoribosyltransferase family. PyrR subfamily.

It catalyses the reaction UMP + diphosphate = 5-phospho-alpha-D-ribose 1-diphosphate + uracil. Functionally, regulates the transcription of the pyrimidine nucleotide (pyr) operon in response to exogenous pyrimidines. Also displays a weak uracil phosphoribosyltransferase activity which is not physiologically significant. The polypeptide is Bifunctional protein PyrR (Citrifermentans bemidjiense (strain ATCC BAA-1014 / DSM 16622 / JCM 12645 / Bem) (Geobacter bemidjiensis)).